The chain runs to 244 residues: Geranylgeranylglyceryl phosphate synthase (244 aa).

Positions 21 and 50 each coordinate Mg(2+). Sn-glycerol 1-phosphate is bound by residues 168–174, 200–201, and 222–223; these read YLEAGSG, GG, and GN.

This sequence belongs to the GGGP/HepGP synthase family. Group II subfamily. Requires Mg(2+) as cofactor.

The protein resides in the cytoplasm. It carries out the reaction sn-glycerol 1-phosphate + (2E,6E,10E)-geranylgeranyl diphosphate = sn-3-O-(geranylgeranyl)glycerol 1-phosphate + diphosphate. It participates in membrane lipid metabolism; glycerophospholipid metabolism. In terms of biological role, prenyltransferase that catalyzes the transfer of the geranylgeranyl moiety of geranylgeranyl diphosphate (GGPP) to the C3 hydroxyl of sn-glycerol-1-phosphate (G1P). This reaction is the first ether-bond-formation step in the biosynthesis of archaeal membrane lipids. The chain is Geranylgeranylglyceryl phosphate synthase from Sulfurisphaera tokodaii (strain DSM 16993 / JCM 10545 / NBRC 100140 / 7) (Sulfolobus tokodaii).